The chain runs to 235 residues: Phosphoribosylaminoimidazole-succinocarboxamide synthase (235 aa).

This sequence belongs to the SAICAR synthetase family.

The enzyme catalyses 5-amino-1-(5-phospho-D-ribosyl)imidazole-4-carboxylate + L-aspartate + ATP = (2S)-2-[5-amino-1-(5-phospho-beta-D-ribosyl)imidazole-4-carboxamido]succinate + ADP + phosphate + 2 H(+). It participates in purine metabolism; IMP biosynthesis via de novo pathway; 5-amino-1-(5-phospho-D-ribosyl)imidazole-4-carboxamide from 5-amino-1-(5-phospho-D-ribosyl)imidazole-4-carboxylate: step 1/2. The sequence is that of Phosphoribosylaminoimidazole-succinocarboxamide synthase from Streptococcus pneumoniae (strain JJA).